The following is a 210-amino-acid chain: Redox-sensing transcriptional repressor Rex (210 aa).

Positions 16–55 form a DNA-binding region, H-T-H motif; that stretch reads IYSRFLKRLDKKGITTVSSGDIAEGVGVSPAQVRKDLAYF. An NAD(+)-binding site is contributed by 90–95; the sequence is GAGNLG.

It belongs to the transcriptional regulatory Rex family. Homodimer.

It localises to the cytoplasm. In terms of biological role, modulates transcription in response to changes in cellular NADH/NAD(+) redox state. This chain is Redox-sensing transcriptional repressor Rex, found in Desulforamulus reducens (strain ATCC BAA-1160 / DSM 100696 / MI-1) (Desulfotomaculum reducens).